An 809-amino-acid polypeptide reads, in one-letter code: WASP homolog-associated protein with actin, membranes and microtubules (809 aa).

Residues 1–260 form a mediates association with membranes region; that stretch reads MEDEQPDSLE…EVATLCKLDI (260 aa). The interval 261-630 is mediates interaction with microtubules; that stretch reads LKSLDEDDLG…FVPVGDQTHS (370 aa). Coiled-coil stretches lie at residues 271–298, 384–479, and 512–542; these read PRRV…IQDI, ELEI…CAKR, and SIQM…LQRL. 4 disordered regions span residues 506 to 528, 546 to 571, 586 to 612, and 627 to 707; these read YSRQ…QKKK, KDKR…PSDL, IHPS…CQNC, and QTHS…FSCP. A compositionally biased stretch (basic and acidic residues) spans 515 to 528; sequence MKRDKIKEEEQKKK. The residue at position 606 (S606) is a Phosphoserine. The tract at residues 631 to 809 is mediates actin nucleation; it reads KSSEELSLPP…DEQDPGQWDG (179 aa). Residues 638–659 are compositionally biased toward pro residues; sequence LPPPPPPPPPPPPPPPPPPPPL. Positions 662-673 are enriched in polar residues; it reads LSSSSQAATHQN. 2 WH2 domains span residues 709–727 and 739–756; these read SMDE…LRKV and INEH…LKKV. A disordered region spans residues 754-809; it reads KKVHPDLGPNPSSKPTSNRRTSDLERSIKAALQRIKRVSADSEEDSDEQDPGQWDG. Polar residues predominate over residues 763-772; sequence NPSSKPTSNR. Residues 770 to 797 are a coiled coil; sequence SNRRTSDLERSIKAALQRIKRVSADSEE. The span at 794–803 shows a compositional bias: acidic residues; the sequence is DSEEDSDEQD. S795 bears the Phosphoserine mark.

Interacts with ACTR3; indicative for an association with the ARP2/3 complex. Associates with microtubules; in vitro binds to tubulin heterodimer in a 1:1 stoichiometry; decorates microtubules with a repeat of 80 A along protofilaments. Interacts with RHOD (in GTP-bound form). As to expression, expressed in brain, lung, heart, colon and kidney (at protein level).

The protein resides in the cytoplasm. It is found in the endoplasmic reticulum-Golgi intermediate compartment. Its subcellular location is the cytoplasmic vesicle membrane. It localises to the golgi apparatus. The protein localises to the cis-Golgi network. Acts as a nucleation-promoting factor (NPF) that stimulates Arp2/3-mediated actin polymerization both at the Golgi apparatus and along tubular membranes. Its activity in membrane tubulation requires F-actin and interaction with microtubules. Proposed to use coordinated actin-nucleating and microtubule-binding activities of distinct WHAMM molecules to drive membrane tubule elongation; when MT-bound can recruit and remodel membrane vesicles but is prevented to activate the Arp2/3 complex. Involved as a regulator of Golgi positioning and morphology. Participates in vesicle transport between the reticulum endoplasmic and the Golgi complex. Required for RhoD-dependent actin reorganization such as in cell adhesion and cell migration. The polypeptide is WASP homolog-associated protein with actin, membranes and microtubules (WHAMM) (Homo sapiens (Human)).